Here is a 208-residue protein sequence, read N- to C-terminus: EF-hand protein 5 variant 1 (208 aa).

Residues 1 to 34 (MQARGTVKVQGDAKVDGKMSTGQHSHHQHLNSTQ) form a disordered region. EF-hand domains are found at residues 64-98 (MAEG…HLTE), 99-134 (EEFH…EVDD), 135-170 (TMAD…LGER), and 171-206 (STPE…SRVN). Residues Glu-118, Asp-123, Asp-148, Thr-152, and Tyr-154 each contribute to the Ca(2+) site.

This chain is EF-hand protein 5 variant 1, found in Trypanosoma cruzi.